The primary structure comprises 290 residues: ADP-ribosylation factor-like protein 13A (290 aa).

Residues glycine 28–threonine 35, aspartate 71–aspartate 75, and asparagine 130–aspartate 133 contribute to the GTP site. The interval serine 204–serine 226 is disordered.

This sequence belongs to the small GTPase superfamily. Arf family.

The polypeptide is ADP-ribosylation factor-like protein 13A (ARL13A) (Homo sapiens (Human)).